The sequence spans 131 residues: UPF0102 protein RPD_0400 (131 aa).

It belongs to the UPF0102 family.

The chain is UPF0102 protein RPD_0400 from Rhodopseudomonas palustris (strain BisB5).